The sequence spans 836 residues: RNA-binding protein 12B-A (836 aa).

One can recognise an RRM 1 domain in the interval 154-229 (PYLFLRGLPY…RFIEVMQGSE (76 aa)). The disordered stretch occupies residues 237–277 (GTATEGGDTPRMRSEEHSPSRRINGRHFRKRSHSKSPRARS). A compositionally biased stretch (basic and acidic residues) spans 244 to 255 (DTPRMRSEEHSP). Basic residues predominate over residues 259–277 (INGRHFRKRSHSKSPRARS). 2 RRM domains span residues 283–359 (FYVH…PVSR) and 401–478 (LCIY…LISE). Disordered stretches follow at residues 539–572 (GHFK…PWEE) and 620–644 (SQEH…RRSR). Residues 550-572 (QSDRRSPEDFRHSPEDYRHPWEE) are compositionally biased toward basic and acidic residues. The residue at position 703 (S703) is a Phosphoserine. Residue K758 is modified to N6-acetyllysine. In terms of domain architecture, RRM 4 spans 760 to 836 (IPVKISNLPF…GPRKVKLSLL (77 aa)).

This is RNA-binding protein 12B-A (Rbm12b1) from Mus musculus (Mouse).